A 164-amino-acid polypeptide reads, in one-letter code: Phosphopantetheine adenylyltransferase (164 aa).

Residue T10 participates in substrate binding. ATP contacts are provided by residues 10–11 (TF) and H18. Residues K42, T79, and R93 each contribute to the substrate site. Residues 94 to 96 (GLR), E104, and 129 to 135 (NQIISSR) each bind ATP.

The protein belongs to the bacterial CoaD family. Homohexamer. It depends on Mg(2+) as a cofactor.

Its subcellular location is the cytoplasm. The enzyme catalyses (R)-4'-phosphopantetheine + ATP + H(+) = 3'-dephospho-CoA + diphosphate. It participates in cofactor biosynthesis; coenzyme A biosynthesis; CoA from (R)-pantothenate: step 4/5. Reversibly transfers an adenylyl group from ATP to 4'-phosphopantetheine, yielding dephospho-CoA (dPCoA) and pyrophosphate. In Pelagibacter ubique (strain HTCC1062), this protein is Phosphopantetheine adenylyltransferase.